A 349-amino-acid chain; its full sequence is Fe(3+) ions import ATP-binding protein FbpC (349 aa).

Residues 7–237 (LVLKNVTKAF…PNSLFLANFM (231 aa)) enclose the ABC transporter domain. Position 39 to 46 (39 to 46 (GPSGCGKT)) interacts with ATP.

This sequence belongs to the ABC transporter superfamily. Fe(3+) ion importer (TC 3.A.1.10) family. In terms of assembly, the complex is composed of two ATP-binding proteins (FbpC), two transmembrane proteins (FbpB) and a solute-binding protein (FbpA).

It is found in the cell inner membrane. The catalysed reaction is Fe(3+)(out) + ATP + H2O = Fe(3+)(in) + ADP + phosphate + H(+). Its function is as follows. Part of the ABC transporter complex FbpABC involved in Fe(3+) ions import. Responsible for energy coupling to the transport system. The polypeptide is Fe(3+) ions import ATP-binding protein FbpC (Pasteurella multocida (strain Pm70)).